We begin with the raw amino-acid sequence, 285 residues long: uncharacterized protein (285 aa).

This is an uncharacterized protein from Borreliella burgdorferi (strain ATCC 35210 / DSM 4680 / CIP 102532 / B31) (Borrelia burgdorferi).